A 309-amino-acid polypeptide reads, in one-letter code: Methyltransferase AacuQ (309 aa).

Positions 57–149 are methyltransferase domain; the sequence is DVGAGNGPYA…QLRPGGTFAC (93 aa).

Belongs to the methyltransferase superfamily.

The protein operates within secondary metabolite biosynthesis. Functionally, methyltransferase; part of the gene cluster that mediates the biosynthesis of the tetrahydroxanthone dimer secalonic acid D. The pathway begins with the synthesis of atrochrysone thioester by the polyketide synthase AacuL. The atrochrysone carboxyl ACP thioesterase AacuM then breaks the thioester bond and releases the atrochrysone carboxylic acid from AacuL. Atrochrysone carboxylic acid is decarboxylated by the decarboxylase AacuI, and oxidized by the anthrone oxygenase AacuG to yield emodin. Emodin is then reduced to emodin hydroquinone by a yet unidentified oxidoreductase. A-ring reduction by the short chain dehydrogenase AacuN, dehydration by the scytalone dehydratase-like protein AacuK and probable spontaneous re-oxidation, results in overall deoxygenation to chrysophanol. Baeyer-Villiger oxidation by the Baeyer-Villiger monooxygenase (BVMO) AacuH then yields monodictyphenone. Monodictyphenone is transformed into compounds with the tetrahydroxanthone skeleton via methylesterification by the methyltransferase AacuQ, followed by the action of the flavin-dependent monooxygenase AacuC, the isomerase AacuP, and the short chain dehydrogenase/reductase AacuF or AacuD. AacuF and AacuD should accept the same compound as a substrate but perform the ketoreduction with a different stereoselectivity, thus yielding blennolides B and A, respectively. In the final step of the biosynthesis, the cytochrome P450 monooxygenase AacuE accepts blennolide B and/or blennolide A to conduct the dimerization reaction to furnish the tetrahydroxanthone dimers, secalonic acids D, B, and F. The sequence is that of Methyltransferase AacuQ from Aspergillus aculeatus (strain ATCC 16872 / CBS 172.66 / WB 5094).